The chain runs to 75 residues: Penaeidin-3n (75 aa).

The first 19 residues, 1–19 (MRLVVCLVFLASFALVCQG), serve as a signal peptide directing secretion. Residue Gln20 is modified to Pyrrolidone carboxylic acid. Intrachain disulfides connect Cys44-Cys59 and Cys48-Cys66. Ser74 carries the post-translational modification Serine amide.

Belongs to the penaeidin family.

It localises to the cytoplasmic granule. Functionally, antibacterial and antifungal activity. Presents chitin-binding activity. The chain is Penaeidin-3n from Penaeus setiferus (Atlantic white shrimp).